Reading from the N-terminus, the 559-residue chain is 2,3-bisphosphoglycerate-independent phosphoglycerate mutase (559 aa).

2 residues coordinate Mn(2+): Asp-28 and Ser-81. The active-site Phosphoserine intermediate is Ser-81. Residues His-140, 170-171 (RD), Arg-206, Arg-213, 286-289 (RADR), and Lys-361 contribute to the substrate site. The Mn(2+) site is built by Asp-430, His-434, Asp-471, His-472, and His-501.

Belongs to the BPG-independent phosphoglycerate mutase family. Monomer. The cofactor is Mn(2+).

It is found in the cytoplasm. It carries out the reaction (2R)-2-phosphoglycerate = (2R)-3-phosphoglycerate. It functions in the pathway carbohydrate degradation; glycolysis; pyruvate from D-glyceraldehyde 3-phosphate: step 3/5. Catalyzes the interconversion of 2-phosphoglycerate and 3-phosphoglycerate. In Mesembryanthemum crystallinum (Common ice plant), this protein is 2,3-bisphosphoglycerate-independent phosphoglycerate mutase (PGM1).